Reading from the N-terminus, the 660-residue chain is Oligopeptide-binding protein AliA (660 aa).

A signal peptide spans 1–22 (MKSSKLFALAGVTLLAATTLAA). The N-palmitoyl cysteine moiety is linked to residue C23. C23 is lipidated: S-diacylglycerol cysteine. The tract at residues 638-660 (EKWMKEKEESNKKAQEDLAKHVK) is disordered.

The protein belongs to the bacterial solute-binding protein 5 family.

It localises to the cell membrane. Part of the binding-protein-dependent transport system for oligopeptides; probably an oligopeptide binding protein. The polypeptide is Oligopeptide-binding protein AliA (aliA) (Streptococcus pneumoniae serotype 4 (strain ATCC BAA-334 / TIGR4)).